The following is a 260-amino-acid chain: Thiazole synthase (260 aa).

Lysine 102 (schiff-base intermediate with DXP) is an active-site residue. Residues glycine 163, 189–190 (AG), and 211–212 (NT) contribute to the 1-deoxy-D-xylulose 5-phosphate site.

Belongs to the ThiG family. In terms of assembly, homotetramer. Forms heterodimers with either ThiH or ThiS.

It is found in the cytoplasm. It carries out the reaction [ThiS sulfur-carrier protein]-C-terminal-Gly-aminoethanethioate + 2-iminoacetate + 1-deoxy-D-xylulose 5-phosphate = [ThiS sulfur-carrier protein]-C-terminal Gly-Gly + 2-[(2R,5Z)-2-carboxy-4-methylthiazol-5(2H)-ylidene]ethyl phosphate + 2 H2O + H(+). It participates in cofactor biosynthesis; thiamine diphosphate biosynthesis. In terms of biological role, catalyzes the rearrangement of 1-deoxy-D-xylulose 5-phosphate (DXP) to produce the thiazole phosphate moiety of thiamine. Sulfur is provided by the thiocarboxylate moiety of the carrier protein ThiS. In vitro, sulfur can be provided by H(2)S. This is Thiazole synthase from Citrifermentans bemidjiense (strain ATCC BAA-1014 / DSM 16622 / JCM 12645 / Bem) (Geobacter bemidjiensis).